Consider the following 206-residue polypeptide: Two-component response regulator ORR7 (206 aa).

Residues Val-53 to Tyr-92 are disordered. The segment covering Ser-61–Ala-88 has biased composition (acidic residues). A Response regulatory domain is found at Tyr-92–Leu-205. Asp-138 carries the 4-aspartylphosphate modification.

This sequence belongs to the ARR family. Type-A subfamily. In terms of processing, two-component system major event consists of a His-to-Asp phosphorelay between a sensor histidine kinase (HK) and a response regulator (RR). In plants, the His-to-Asp phosphorelay involves an additional intermediate named Histidine-containing phosphotransfer protein (HPt). This multistep phosphorelay consists of a His-Asp-His-Asp sequential transfer of a phosphate group between first a His and an Asp of the HK protein, followed by the transfer to a conserved His of the HPt protein and finally the transfer to an Asp in the receiver domain of the RR protein. In terms of tissue distribution, expressed in flowers, and at low levels in roots, mature leaves and shoots.

Functionally, functions as a response regulator involved in His-to-Asp phosphorelay signal transduction system. Phosphorylation of the Asp residue in the receiver domain activates the ability of the protein to promote the transcription of target genes. Type-A response regulators seem to act as negative regulators of the cytokinin signaling. This is Two-component response regulator ORR7 from Oryza sativa subsp. indica (Rice).